The chain runs to 365 residues: Parathion hydrolase (365 aa).

The tat-type signal signal peptide spans methionine 1–glycine 29. Positions 55, 57, 169, 201, 230, and 301 each coordinate Zn(2+). The residue at position 169 (lysine 169) is an N6-carboxylysine.

Belongs to the metallo-dependent hydrolases superfamily. Phosphotriesterase family. Homodimer. Requires Zn(2+) as cofactor. Predicted to be exported by the Tat system. The position of the signal peptide cleavage has been experimentally proven.

It is found in the cell membrane. It carries out the reaction An aryl dialkyl phosphate + H2O = dialkyl phosphate + an aryl alcohol.. Its function is as follows. Has an unusual substrate specificity for synthetic organophosphate triesters and phosphorofluoridates. All of the phosphate triesters found to be substrates are synthetic compounds. The identity of any naturally occurring substrate for the enzyme is unknown. Has no detectable activity with phosphate monoesters or diesters and no activity as an esterase or protease. It catalyzes the hydrolysis of the insecticide paraoxon at a rate approaching the diffusion limit and thus appears to be optimally evolved for utilizing this synthetic substrate. The sequence is that of Parathion hydrolase (opd) from Brevundimonas diminuta (Pseudomonas diminuta).